The sequence spans 363 residues: NADH-quinone oxidoreductase subunit H (363 aa).

A run of 10 helical transmembrane segments spans residues Val29–Trp49, Gly62–Phe82, Phe96–Phe116, Val127–Gly147, Ala163–Ala183, Phe202–Val222, Ile239–Leu257, Ile264–Val286, Thr299–Phe319, and Phe339–Ile359.

Belongs to the complex I subunit 1 family. As to quaternary structure, NDH-1 is composed of 14 different subunits. Subunits NuoA, H, J, K, L, M, N constitute the membrane sector of the complex.

Its subcellular location is the cell inner membrane. It catalyses the reaction a quinone + NADH + 5 H(+)(in) = a quinol + NAD(+) + 4 H(+)(out). Functionally, NDH-1 shuttles electrons from NADH, via FMN and iron-sulfur (Fe-S) centers, to quinones in the respiratory chain. The immediate electron acceptor for the enzyme in this species is believed to be ubiquinone. Couples the redox reaction to proton translocation (for every two electrons transferred, four hydrogen ions are translocated across the cytoplasmic membrane), and thus conserves the redox energy in a proton gradient. This subunit may bind ubiquinone. The sequence is that of NADH-quinone oxidoreductase subunit H from Xanthomonas campestris pv. campestris (strain 8004).